The sequence spans 61 residues: Small ribosomal subunit protein uS14B (61 aa).

Cys-24, Cys-27, Cys-40, and Cys-43 together coordinate Zn(2+).

The protein belongs to the universal ribosomal protein uS14 family. Zinc-binding uS14 subfamily. In terms of assembly, part of the 30S ribosomal subunit. Contacts proteins S3 and S10. Zn(2+) serves as cofactor.

In terms of biological role, binds 16S rRNA, required for the assembly of 30S particles and may also be responsible for determining the conformation of the 16S rRNA at the A site. In Listeria welshimeri serovar 6b (strain ATCC 35897 / DSM 20650 / CCUG 15529 / CIP 8149 / NCTC 11857 / SLCC 5334 / V8), this protein is Small ribosomal subunit protein uS14B.